A 380-amino-acid chain; its full sequence is GTP-binding protein 10 (380 aa).

The Obg domain maps to 13 to 148 (GNFVDNVRLY…RNIRLDLKLI (136 aa)). In terms of domain architecture, OBG-type G spans 149–344 (ADFGLVGFPN…LKSLIRQSLE (196 aa)). Residues 155 to 162 (GFPNAGKS), 202 to 206 (DLPGL), and 278 to 281 (NKMD) contribute to the GTP site.

It belongs to the TRAFAC class OBG-HflX-like GTPase superfamily. OBG GTPase family.

The protein localises to the nucleus. The protein resides in the nucleolus. May be involved in the ribosome maturation process. This is GTP-binding protein 10 (gtpbp10) from Danio rerio (Zebrafish).